We begin with the raw amino-acid sequence, 253 residues long: 5-oxoprolinase subunit A (253 aa).

This sequence belongs to the LamB/PxpA family. Forms a complex composed of PxpA, PxpB and PxpC.

The enzyme catalyses 5-oxo-L-proline + ATP + 2 H2O = L-glutamate + ADP + phosphate + H(+). Catalyzes the cleavage of 5-oxoproline to form L-glutamate coupled to the hydrolysis of ATP to ADP and inorganic phosphate. The chain is 5-oxoprolinase subunit A from Chloroflexus aurantiacus (strain ATCC 29364 / DSM 637 / Y-400-fl).